A 55-amino-acid chain; its full sequence is Large ribosomal subunit protein bL33 (55 aa).

It belongs to the bacterial ribosomal protein bL33 family.

This Gluconobacter oxydans (strain 621H) (Gluconobacter suboxydans) protein is Large ribosomal subunit protein bL33.